Consider the following 332-residue polypeptide: Fructose-1,6-bisphosphatase class 1 (332 aa).

Residues Glu94, Asp116, Leu118, and Asp119 each coordinate Mg(2+). Residues 119–122, Asn211, Tyr239, 257–259, and Lys269 contribute to the substrate site; these read DGSS and YLY. A Mg(2+)-binding site is contributed by Glu275.

The protein belongs to the FBPase class 1 family. Homotetramer. Requires Mg(2+) as cofactor.

It is found in the cytoplasm. It carries out the reaction beta-D-fructose 1,6-bisphosphate + H2O = beta-D-fructose 6-phosphate + phosphate. Its pathway is carbohydrate biosynthesis; Calvin cycle. The sequence is that of Fructose-1,6-bisphosphatase class 1 from Synechococcus sp. (strain JA-2-3B'a(2-13)) (Cyanobacteria bacterium Yellowstone B-Prime).